Here is a 137-residue protein sequence, read N- to C-terminus: Large ribosomal subunit protein uL16 (137 aa).

Belongs to the universal ribosomal protein uL16 family. Part of the 50S ribosomal subunit.

Functionally, binds 23S rRNA and is also seen to make contacts with the A and possibly P site tRNAs. The protein is Large ribosomal subunit protein uL16 of Cellvibrio japonicus (strain Ueda107) (Pseudomonas fluorescens subsp. cellulosa).